The primary structure comprises 243 residues: MSLYRDEGIVLRTQDLGEADRIVTLLTRRTGLVRAVGKGVRRTRSRFGARLEPFTHIDVQLHAGKSLDVVTQVDTLHAYGSVLVTDYPRYTAGVAMLETAEKVVSVEKDPALRQFLLLWGGLRTLAEGAHDPRLVLDAYLLRSLAVAGYAPALEECAHCGVPGPHREFAVHAGGMVCSLCRPAGSVKPSPAAVALMVALLRGDWESADASAERDRTECSGLVAAYLQWHLENGVRSLRLVERA.

This sequence belongs to the RecO family.

Functionally, involved in DNA repair and RecF pathway recombination. This is DNA repair protein RecO from Thermobifida fusca (strain YX).